The following is a 332-amino-acid chain: uncharacterized protein (332 aa).

The first 23 residues, 1–23 (MKRIPSLIIGLLLILATWHSVLA), serve as a signal peptide directing secretion. Residues 231 to 251 (SFFLGMIVTLIILAPVILYLW) traverse the membrane as a helical segment.

It localises to the membrane. This is an uncharacterized protein from Pyrococcus horikoshii (strain ATCC 700860 / DSM 12428 / JCM 9974 / NBRC 100139 / OT-3).